Reading from the N-terminus, the 163-residue chain is Nucleotide-binding protein KPN78578_03700 (163 aa).

This sequence belongs to the YajQ family.

Its function is as follows. Nucleotide-binding protein. The protein is Nucleotide-binding protein KPN78578_03700 of Klebsiella pneumoniae subsp. pneumoniae (strain ATCC 700721 / MGH 78578).